We begin with the raw amino-acid sequence, 200 residues long: ATP-dependent Clp protease proteolytic subunit 2 (200 aa).

The active-site Nucleophile is Ser101. The active site involves His126.

It belongs to the peptidase S14 family. Fourteen ClpP subunits assemble into 2 heptameric rings which stack back to back to give a disk-like structure with a central cavity, resembling the structure of eukaryotic proteasomes.

Its subcellular location is the cytoplasm. It catalyses the reaction Hydrolysis of proteins to small peptides in the presence of ATP and magnesium. alpha-casein is the usual test substrate. In the absence of ATP, only oligopeptides shorter than five residues are hydrolyzed (such as succinyl-Leu-Tyr-|-NHMec, and Leu-Tyr-Leu-|-Tyr-Trp, in which cleavage of the -Tyr-|-Leu- and -Tyr-|-Trp bonds also occurs).. In terms of biological role, cleaves peptides in various proteins in a process that requires ATP hydrolysis. Has a chymotrypsin-like activity. Plays a major role in the degradation of misfolded proteins. In Prochlorococcus marinus (strain MIT 9313), this protein is ATP-dependent Clp protease proteolytic subunit 2.